Reading from the N-terminus, the 195-residue chain is Imidazoleglycerol-phosphate dehydratase (195 aa).

The protein belongs to the imidazoleglycerol-phosphate dehydratase family.

Its subcellular location is the cytoplasm. It carries out the reaction D-erythro-1-(imidazol-4-yl)glycerol 3-phosphate = 3-(imidazol-4-yl)-2-oxopropyl phosphate + H2O. Its pathway is amino-acid biosynthesis; L-histidine biosynthesis; L-histidine from 5-phospho-alpha-D-ribose 1-diphosphate: step 6/9. The chain is Imidazoleglycerol-phosphate dehydratase from Paraburkholderia xenovorans (strain LB400).